We begin with the raw amino-acid sequence, 587 residues long: Probable intramembrane protease YKL100C (587 aa).

The Lumenal portion of the chain corresponds to 1-85 (MDKYLNSFVD…HSLVFNYATL (85 aa)). A helical membrane pass occupies residues 86-106 (VLIASALVVIGSFTSISSIPF). Residues 107–156 (TALPPTREHSLFDPTDFDVDHDCHVIYRENDEDKKKKKKSKRFFDMMDEK) lie on the Cytoplasmic side of the membrane. A helical membrane pass occupies residues 157-177 (HAIILPLTSGCTLLALYFVIK). The Lumenal portion of the chain corresponds to 178–192 (KLHLNWLKYVVKILN). The helical transmembrane segment at 193–213 (FNITLLNIPAGTFVYSYFLNS) threads the bilayer. The Cytoplasmic segment spans residues 214-303 (LFRNLSHLAS…KSKRQISNMY (90 aa)). A helical membrane pass occupies residues 304-324 (LNSALIVSFVLSIVSTVYFYL). Residues 325–328 (SPND) are Lumenal-facing. The helical transmembrane segment at 329–349 (WLISNAVSMNMAIWSIAQLKL) threads the bilayer. At 350–351 (KN) the chain is on the cytoplasmic side. A helical membrane pass occupies residues 352–372 (LKSGALILIALFFYDICFVFG). The active site involves D366. At 373-401 (TDVMVTVATNLDIPVKLSLPVKFNTAQNN) the chain is on the lumenal side. Residues 402 to 422 (FNFSILGLGDIALPGMFIAMC) traverse the membrane as a helical segment. D411 is an active-site residue. Residues 423 to 450 (YKYDIWKWHLDHDDTEFHFLNWSYVGKY) are Cytoplasmic-facing. Residues 451 to 471 (FITAMVSYVASLVSAMVSLSI) form a helical membrane-spanning segment. Over 472–475 (FNTA) the chain is Lumenal. Residues 476–496 (QPALLYIVPSLLISTILVACW) form a helical membrane-spanning segment. The PAL motif lies at 477-479 (PAL). Over 497–587 (NKDFKQFWNF…EEDLLDDESS (91 aa)) the chain is Cytoplasmic. A disordered region spans residues 561–587 (EFVQEEDLSDSSEEELSEEDLLDDESS).

It belongs to the peptidase A22B family.

The protein resides in the membrane. Its subcellular location is the endoplasmic reticulum membrane. May act as intramembrane protease. The chain is Probable intramembrane protease YKL100C from Saccharomyces cerevisiae (strain ATCC 204508 / S288c) (Baker's yeast).